Consider the following 283-residue polypeptide: MHTALRSILIVTKSGHREAEALGERMRAWLAARGLSARVVENTGDAVSLAVAGQECSLALVLGGDGTILGVARRLLGSGVPLLGVNLGKVGFLAEVAATRWESSLERLLSGGVTVQERLALSFRVERDGATVHSGGAVNDVVINRGILARVINLDLRVGSERLGELRADGLIVSTPTGATGYSVSARGPLVHPQLHVYTVTPICPFLNNLLPLVLPGEARLSVTVRDRTNEVYLTQDGQEGYALQAGDVVHVERAPGGMLFATIEELSYYRKLKAKGFIKDQA.

Residue D65 is the Proton acceptor of the active site. NAD(+) is bound by residues 65–66 (DG), 139–140 (ND), R150, R167, D169, 180–185 (TGYSVS), and Q239.

This sequence belongs to the NAD kinase family. The cofactor is a divalent metal cation.

It localises to the cytoplasm. The catalysed reaction is NAD(+) + ATP = ADP + NADP(+) + H(+). Functionally, involved in the regulation of the intracellular balance of NAD and NADP, and is a key enzyme in the biosynthesis of NADP. Catalyzes specifically the phosphorylation on 2'-hydroxyl of the adenosine moiety of NAD to yield NADP. In Nitratidesulfovibrio vulgaris (strain DSM 19637 / Miyazaki F) (Desulfovibrio vulgaris), this protein is NAD kinase.